The following is a 101-amino-acid chain: Phosphoribosyl-AMP cyclohydrolase (101 aa).

Aspartate 71 contacts Mg(2+). Cysteine 72 provides a ligand contact to Zn(2+). Residues aspartate 73 and aspartate 75 each contribute to the Mg(2+) site. Positions 88 and 95 each coordinate Zn(2+).

Belongs to the PRA-CH family. Homodimer. Mg(2+) serves as cofactor. Zn(2+) is required as a cofactor.

The protein resides in the cytoplasm. The catalysed reaction is 1-(5-phospho-beta-D-ribosyl)-5'-AMP + H2O = 1-(5-phospho-beta-D-ribosyl)-5-[(5-phospho-beta-D-ribosylamino)methylideneamino]imidazole-4-carboxamide. It functions in the pathway amino-acid biosynthesis; L-histidine biosynthesis; L-histidine from 5-phospho-alpha-D-ribose 1-diphosphate: step 3/9. Catalyzes the hydrolysis of the adenine ring of phosphoribosyl-AMP. The protein is Phosphoribosyl-AMP cyclohydrolase of Bacillus cereus (strain AH187).